Consider the following 693-residue polypeptide: Zinc finger protein 441 (693 aa).

The KRAB domain maps to 4-79; it reads VAFEDVAINF…ERACEIKDNS (76 aa). The C2H2-type 1 zinc finger occupies 169-190; that stretch reads YDCKECASFSSLENLQRHMAAH. The C2H2-type 2; degenerate zinc-finger motif lies at 196–218; sequence RICKLCGNAFIWPSLFHMLRRTH. A C2H2-type 3; degenerate zinc finger spans residues 224-246; sequence YEYEQCSTAFPAYSSTLRHERTH. The C2H2-type 4; degenerate zinc finger occupies 252 to 274; sequence YQCKQCGKAFSCSCYTQLYERTH. C2H2-type zinc fingers lie at residues 280-302, 308-330, 336-358, 364-386, 392-413, 419-441, 447-469, 475-497, 503-525, 531-553, 559-581, 587-609, 615-637, 643-665, and 671-693; these read YECK…MIVH, HKCK…KRTH, YECK…MITH, HKCK…ETTH, YKCE…ETTH, YKCK…ERIH, YKCK…EKTH, YECK…MIMH, HKCK…ERIH, YKCK…ERTH, YGCQ…MITH, HKCK…ERTH, YECK…ERVH, and YKCK…EMTH.

Belongs to the krueppel C2H2-type zinc-finger protein family.

It localises to the nucleus. May be involved in transcriptional regulation. The sequence is that of Zinc finger protein 441 (ZNF441) from Homo sapiens (Human).